The following is a 169-amino-acid chain: Alpha-S2-casein-like B (169 aa).

Positions 1 to 15 (MKFIILTCLLAVALA) are cleaved as a signal peptide.

This sequence belongs to the alpha-casein family. As to expression, mammary gland specific. Secreted in milk.

The protein localises to the secreted. Important role in the capacity of milk to transport calcium phosphate. The polypeptide is Alpha-S2-casein-like B (Csn1s2b) (Rattus norvegicus (Rat)).